We begin with the raw amino-acid sequence, 389 residues long: Phosphoglycerate kinase (389 aa).

Substrate is bound by residues 21 to 23 (DLN), Arg36, 59 to 62 (HLGR), Arg112, and Arg145. ATP contacts are provided by residues Lys196, Glu318, and 344–347 (GGDS).

It belongs to the phosphoglycerate kinase family. In terms of assembly, monomer.

It localises to the cytoplasm. It catalyses the reaction (2R)-3-phosphoglycerate + ATP = (2R)-3-phospho-glyceroyl phosphate + ADP. Its pathway is carbohydrate degradation; glycolysis; pyruvate from D-glyceraldehyde 3-phosphate: step 2/5. In Desulfovibrio desulfuricans (strain ATCC 27774 / DSM 6949 / MB), this protein is Phosphoglycerate kinase.